Here is a 402-residue protein sequence, read N- to C-terminus: GTPase Obg (402 aa).

An Obg domain is found at 1–159; sequence MRFIDEAIVT…KELKFELKVV (159 aa). Residues 160–334 enclose the OBG-type G domain; it reads ADVGLIGLPN…VKYHLMNEIE (175 aa). Residues 166–173, 191–195, 213–216, 283–286, and 315–317 contribute to the GTP site; these read GLPNAGKS, FTTLV, DIPG, NKID, and STL. Ser-173 and Thr-193 together coordinate Mg(2+). The segment at 382–402 is disordered; that stretch reads AAFNNELDDDDDDGVEVVYAP. Over residues 387-396 the composition is skewed to acidic residues; it reads ELDDDDDDGV.

This sequence belongs to the TRAFAC class OBG-HflX-like GTPase superfamily. OBG GTPase family. In terms of assembly, monomer. Requires Mg(2+) as cofactor.

It localises to the cytoplasm. In terms of biological role, an essential GTPase which binds GTP, GDP and possibly (p)ppGpp with moderate affinity, with high nucleotide exchange rates and a fairly low GTP hydrolysis rate. Plays a role in control of the cell cycle, stress response, ribosome biogenesis and in those bacteria that undergo differentiation, in morphogenesis control. The protein is GTPase Obg of Psychrobacter sp. (strain PRwf-1).